The following is a 251-amino-acid chain: Ubiquinone/menaquinone biosynthesis C-methyltransferase UbiE (251 aa).

Residues threonine 74, aspartate 95, 123–124 (NA), and serine 140 contribute to the S-adenosyl-L-methionine site.

Belongs to the class I-like SAM-binding methyltransferase superfamily. MenG/UbiE family.

The catalysed reaction is a 2-demethylmenaquinol + S-adenosyl-L-methionine = a menaquinol + S-adenosyl-L-homocysteine + H(+). It catalyses the reaction a 2-methoxy-6-(all-trans-polyprenyl)benzene-1,4-diol + S-adenosyl-L-methionine = a 5-methoxy-2-methyl-3-(all-trans-polyprenyl)benzene-1,4-diol + S-adenosyl-L-homocysteine + H(+). It functions in the pathway quinol/quinone metabolism; menaquinone biosynthesis; menaquinol from 1,4-dihydroxy-2-naphthoate: step 2/2. It participates in cofactor biosynthesis; ubiquinone biosynthesis. Methyltransferase required for the conversion of demethylmenaquinol (DMKH2) to menaquinol (MKH2) and the conversion of 2-polyprenyl-6-methoxy-1,4-benzoquinol (DDMQH2) to 2-polyprenyl-3-methyl-6-methoxy-1,4-benzoquinol (DMQH2). The polypeptide is Ubiquinone/menaquinone biosynthesis C-methyltransferase UbiE (Yersinia enterocolitica serotype O:8 / biotype 1B (strain NCTC 13174 / 8081)).